We begin with the raw amino-acid sequence, 438 residues long: 23S rRNA (uracil(1939)-C(5))-methyltransferase RlmD (438 aa).

In terms of domain architecture, TRAM spans 11–69; the sequence is LQPESKHQQVLVEKLDHQGAGIAYLNKKPLFIDGTLPGEEVVTQLTESKSKFARGKLIK. [4Fe-4S] cluster contacts are provided by cysteine 82, cysteine 88, cysteine 91, and cysteine 169. 6 residues coordinate S-adenosyl-L-methionine: glutamine 272, phenylalanine 301, asparagine 306, glutamate 322, asparagine 349, and aspartate 370. Residue cysteine 396 is the Nucleophile of the active site.

The protein belongs to the class I-like SAM-binding methyltransferase superfamily. RNA M5U methyltransferase family. RlmD subfamily.

It carries out the reaction uridine(1939) in 23S rRNA + S-adenosyl-L-methionine = 5-methyluridine(1939) in 23S rRNA + S-adenosyl-L-homocysteine + H(+). In terms of biological role, catalyzes the formation of 5-methyl-uridine at position 1939 (m5U1939) in 23S rRNA. The sequence is that of 23S rRNA (uracil(1939)-C(5))-methyltransferase RlmD from Vibrio vulnificus (strain YJ016).